Here is a 288-residue protein sequence, read N- to C-terminus: 4-diphosphocytidyl-2-C-methyl-D-erythritol kinase (288 aa).

K12 is an active-site residue. ATP is bound at residue 95–105 (PAGGGVGGGSS). D137 is a catalytic residue.

This sequence belongs to the GHMP kinase family. IspE subfamily.

The enzyme catalyses 4-CDP-2-C-methyl-D-erythritol + ATP = 4-CDP-2-C-methyl-D-erythritol 2-phosphate + ADP + H(+). The protein operates within isoprenoid biosynthesis; isopentenyl diphosphate biosynthesis via DXP pathway; isopentenyl diphosphate from 1-deoxy-D-xylulose 5-phosphate: step 3/6. In terms of biological role, catalyzes the phosphorylation of the position 2 hydroxy group of 4-diphosphocytidyl-2C-methyl-D-erythritol. The protein is 4-diphosphocytidyl-2-C-methyl-D-erythritol kinase of Halorhodospira halophila (strain DSM 244 / SL1) (Ectothiorhodospira halophila (strain DSM 244 / SL1)).